We begin with the raw amino-acid sequence, 195 residues long: Imidazoleglycerol-phosphate dehydratase (195 aa).

It belongs to the imidazoleglycerol-phosphate dehydratase family.

The protein localises to the cytoplasm. It catalyses the reaction D-erythro-1-(imidazol-4-yl)glycerol 3-phosphate = 3-(imidazol-4-yl)-2-oxopropyl phosphate + H2O. It participates in amino-acid biosynthesis; L-histidine biosynthesis; L-histidine from 5-phospho-alpha-D-ribose 1-diphosphate: step 6/9. This Thermotoga neapolitana (strain ATCC 49049 / DSM 4359 / NBRC 107923 / NS-E) protein is Imidazoleglycerol-phosphate dehydratase.